A 669-amino-acid chain; its full sequence is MSDGPIQPPKPAVVHEAHEVDTFHVPKAFHDKHPSGTHIKDIEEYKKLYEESIKSPDTFWARMARELLTFDKDFETTHHGSFENGDNAWFVEGRLNASFNCVDRHALKNPDKVAIIYEADEPNEGRKITYGELMREVSRVAWTLKERGVKKGDTVGIYLPMIPEAVIAFLACSRIGAVHSVVFAGFSSDSLRDRVLDASSKVIITSDEGKRGGKIIGTKKIVDEAMKQCPDVHTVLVYKRTGAEVPWTAGRDIWWHEEVEKYPNYLAPESVSSEDPLFLLYTSGSTGKPKGVMHTTAGYLLGAAMTGKYVFDIHDDDRYFCGGDVGWITGHTYVVYAPLLLGCATVVFESTPAYPNFSRYWDVIDKHDVTQFYVAPTALRLLKRAGDEHIHHKMHSLRILGSVGEPIAAEVWKWYFECVGKEEAHICDTYWQTETGSHVITPLGGITPTKPGSASLPFFGIEPAIIDPVSGEEIVGNDVEGVLAFKQPWPSMARTVWGAHKRYMDTYLNVYKGYYFTGDGAGRDHDGYYWIRGRVDDVVNVSGHRLSTAEIEAALLEHPSVAEAAVVGIADELTGQAVNAFVSLKEGKPTEQISKDLAMQVRKSIGPFAAPKAVFVVDDLPKTRSGKIMRRILRKILSGEEDSLGDTSTLSDPSVVDKIIETVHSARQK.

CoA contacts are provided by residues 211–214 (RGGK) and threonine 329. ATP-binding positions include 404–406 (GEP), 428–433 (DTYWQT), aspartate 519, and arginine 534. Serine 542 serves as a coordination point for CoA. Arginine 545 contributes to the ATP binding site. A CoA-binding site is contributed by arginine 602.

This sequence belongs to the ATP-dependent AMP-binding enzyme family.

It catalyses the reaction acetate + ATP + CoA = acetyl-CoA + AMP + diphosphate. It functions in the pathway ketone degradation; acetoin degradation. The protein operates within antibiotic biosynthesis; penicillin biosynthesis. This is Acetyl-coenzyme A synthetase (facA) from Penicillium chrysogenum (Penicillium notatum).